The primary structure comprises 116 residues: MSQQLLEELGRRQYRTDIPEFRVGDTVRVGVKVVEGNRERVQDFEGVVIRRRGEGINENFTVRRIASHGIGVERTFLLHAPRIDSIKVIRQGKVRRAKLYYLRGRAGKAARIRERR.

The protein belongs to the bacterial ribosomal protein bL19 family.

Functionally, this protein is located at the 30S-50S ribosomal subunit interface and may play a role in the structure and function of the aminoacyl-tRNA binding site. The sequence is that of Large ribosomal subunit protein bL19 from Chloroflexus aurantiacus (strain ATCC 29366 / DSM 635 / J-10-fl).